The primary structure comprises 109 residues: MAVCIAVIAKENYPLYIRSTPTENKLKFHYMVHTSLDVVDEKISAMGKALVDQRELYLGLLYPTEDYKMFRKLHNSYTDVMCNPFYNPGDRIQSRAFDNMVTSMMIQVC.

The protein belongs to the TRAPP small subunits family. Sedlin subfamily. In terms of assembly, component of the multisubunit TRAPP (transport protein particle) complex, which includes at least TRAPPC2, TRAPPC2L, TRAPPC3, TRAPPC3L, TRAPPC4, TRAPPC5, TRAPPC8, TRAPPC9, TRAPPC10, TRAPPC11 and TRAPPC12. Interacts with the heterodimer TRAPPC3-TRAPPC6A.

The protein resides in the cytoplasm. The protein localises to the perinuclear region. It localises to the endoplasmic reticulum. Its subcellular location is the golgi apparatus. May play a role in vesicular transport from endoplasmic reticulum to Golgi. The protein is Trafficking protein particle complex subunit 2-like protein (TRAPPC2L) of Pongo abelii (Sumatran orangutan).